Reading from the N-terminus, the 428-residue chain is ATP-dependent RNA helicase RhlB (428 aa).

The Q motif signature appears at 9-37; that stretch reads QKFSDFALHPLVLEALEKKGFQHCTPIQA. In terms of domain architecture, Helicase ATP-binding spans 40 to 219; the sequence is LPLTLSGRDV…FEQMNNAEYV (180 aa). 53-60 contributes to the ATP binding site; that stretch reads AQTGTGKT. The short motif at 165 to 168 is the DEAD box element; sequence DEAD. One can recognise a Helicase C-terminal domain in the interval 245-390; that stretch reads RLLQTLIEEE…VSKYNSDALL (146 aa). The tract at residues 392 to 428 is disordered; it reads DLPAPKRLARPRGGNGPRRNSAPRRGGAPRNNRKRSG. The segment covering 408–421 has biased composition (low complexity); it reads PRRNSAPRRGGAPR.

It belongs to the DEAD box helicase family. RhlB subfamily. Component of the RNA degradosome, which is a multiprotein complex involved in RNA processing and mRNA degradation.

The protein resides in the cytoplasm. The catalysed reaction is ATP + H2O = ADP + phosphate + H(+). Its function is as follows. DEAD-box RNA helicase involved in RNA degradation. Has RNA-dependent ATPase activity and unwinds double-stranded RNA. The polypeptide is ATP-dependent RNA helicase RhlB (Serratia proteamaculans (strain 568)).